The primary structure comprises 232 residues: Large ribosomal subunit protein uL1 (232 aa).

This sequence belongs to the universal ribosomal protein uL1 family. Part of the 50S ribosomal subunit.

In terms of biological role, binds directly to 23S rRNA. The L1 stalk is quite mobile in the ribosome, and is involved in E site tRNA release. Protein L1 is also a translational repressor protein, it controls the translation of the L11 operon by binding to its mRNA. This chain is Large ribosomal subunit protein uL1, found in Christiangramia forsetii (strain DSM 17595 / CGMCC 1.15422 / KT0803) (Gramella forsetii).